Reading from the N-terminus, the 561-residue chain is uncharacterized protein (561 aa).

The N-terminal stretch at 1–24 (MELGAWRSILYIAFLFAITRHAFC) is a signal peptide. At 25–509 (KAVNLVHSPE…GYVYLSEIKQ (485 aa)) the chain is on the lumenal side. Residues 510–530 (YSSLILISLWISLILFVSFLN) traverse the membrane as a helical segment. The Cytoplasmic segment spans residues 531–561 (RRLILHYSFESVHQLKTLTRKFIYSSLLKQD).

Its subcellular location is the endoplasmic reticulum membrane. It is found in the golgi apparatus membrane. This is an uncharacterized protein from Schizosaccharomyces pombe (strain 972 / ATCC 24843) (Fission yeast).